Consider the following 399-residue polypeptide: F-box protein At1g30790 (399 aa).

The 47-residue stretch at 3 to 49 (RQEIDHIPFDLTVEILTRLPAKSLMKFKCVSKLWSSIIHNQSFIDSF) folds into the F-box domain.

The chain is F-box protein At1g30790 from Arabidopsis thaliana (Mouse-ear cress).